Here is a 275-residue protein sequence, read N- to C-terminus: Elongation factor Ts (275 aa).

Positions 80–83 (TDFV) are involved in Mg(2+) ion dislocation from EF-Tu.

This sequence belongs to the EF-Ts family.

Its subcellular location is the cytoplasm. In terms of biological role, associates with the EF-Tu.GDP complex and induces the exchange of GDP to GTP. It remains bound to the aminoacyl-tRNA.EF-Tu.GTP complex up to the GTP hydrolysis stage on the ribosome. The sequence is that of Elongation factor Ts from Clavibacter sepedonicus (Clavibacter michiganensis subsp. sepedonicus).